An 837-amino-acid polypeptide reads, in one-letter code: Tuftelin-interacting protein 11 (837 aa).

Basic and acidic residues-rich tracts occupy residues 1-13 (MSLSHLYRDGEGR) and 53-64 (VWAERDSDDERP). Disordered stretches follow at residues 1–21 (MSLSHLYRDGEGRIDDDDDER), 53–72 (VWAERDSDDERPSFGGKRAR), and 85–133 (LKKG…KGFA). The required for interaction with DHX15 stretch occupies residues 1–50 (MSLSHLYRDGEGRIDDDDDERENFEITDWDLQNEFNPNRQRHWQTKEEAT). Ser-2, Ser-59, and Ser-98 each carry phosphoserine. A compositionally biased stretch (acidic residues) spans 91–102 (EEAELEDSDDEE). The span at 103–116 (KPVKQDDFPKDFGP) shows a compositional bias: basic and acidic residues. Phosphoserine is present on Ser-144. The G-patch domain occupies 149–195 (TKGIGQKLLQKMGYVPGRGLGKNAQGIINPIEAKQRKGKGAVGAYGS). The tract at residues 179–236 (IEAKQRKGKGAVGAYGSERTTQSMQDFPVVDSEEEAEEEFQKELSQWRKDPSGSKKKP) is disordered. Ser-210 carries the phosphoserine modification. The span at 217 to 231 (EFQKELSQWRKDPSG) shows a compositional bias: basic and acidic residues. The short motif at 700 to 705 (VKDKFN) is the Nuclear localization signal element. The interval 710–734 (IMNRAVSSNVGAYMQPGARENIAYL) is required for nuclear speckle localization.

This sequence belongs to the TFP11/STIP family. In terms of assembly, identified in the spliceosome C complex. Found in the Intron Large (IL) complex, a post-mRNA release spliceosomal complex containing the excised intron, U2, U5 and U6 snRNPs, and splicing factors. Interacts with TUFT1. Interacts with DHX15; indicative for a recruitment of DHX15 to the IL complex. Interacts with GCFC2.

The protein localises to the cytoplasm. The protein resides in the nucleus. Functionally, involved in pre-mRNA splicing, specifically in spliceosome disassembly during late-stage splicing events. Intron turnover seems to proceed through reactions in two lariat-intron associated complexes termed Intron Large (IL) and Intron Small (IS). In cooperation with DHX15 seems to mediate the transition of the U2, U5 and U6 snRNP-containing IL complex to the snRNP-free IS complex leading to efficient debranching and turnover of excised introns. May play a role in the differentiation of ameloblasts and odontoblasts or in the forming of the enamel extracellular matrix. The protein is Tuftelin-interacting protein 11 (TFIP11) of Homo sapiens (Human).